A 255-amino-acid chain; its full sequence is MNTLTVKDIKDRLQEVKDAQDPFIAQCENDPRKSVQTLVEQWLKKQAKEKALKEQWVNMTSYERLARNKGFRLIAGVDEVGRGPLAGPVVASAVILPEECEILGLTDSKKLSEKKREEYYELIMKEALAVGIGIVEATVIDEINIYEASKMAMVKAIQDLSDTPDYLLVDAMTLPLDTAQASIIKGDAKSVSIAAGACIAKVTRDRMMSAYAETYPMYGFEKNKGYGTKEHLEALAAYGPTELHRKTFAPVQSFR.

Residues 72–255 (RLIAGVDEVG…KTFAPVQSFR (184 aa)) form the RNase H type-2 domain. Residues Asp-78, Glu-79, and Asp-170 each contribute to the a divalent metal cation site.

The protein belongs to the RNase HII family. Mn(2+) serves as cofactor. The cofactor is Mg(2+).

The protein resides in the cytoplasm. It carries out the reaction Endonucleolytic cleavage to 5'-phosphomonoester.. In terms of biological role, endonuclease that specifically degrades the RNA of RNA-DNA hybrids. In Bacillus subtilis (strain 168), this protein is Ribonuclease HII (rnhB).